The chain runs to 216 residues: Small ribosomal subunit protein eS6 (216 aa).

Belongs to the eukaryotic ribosomal protein eS6 family.

The sequence is that of Small ribosomal subunit protein eS6 from Staphylothermus marinus (strain ATCC 43588 / DSM 3639 / JCM 9404 / F1).